We begin with the raw amino-acid sequence, 240 residues long: Ribosomal RNA small subunit methyltransferase G (240 aa).

S-adenosyl-L-methionine-binding positions include G79, 130–131, and R149; that span reads AE.

It belongs to the methyltransferase superfamily. RNA methyltransferase RsmG family.

The protein resides in the cytoplasm. Functionally, specifically methylates the N7 position of a guanine in 16S rRNA. The sequence is that of Ribosomal RNA small subunit methyltransferase G from Moorella thermoacetica (strain ATCC 39073 / JCM 9320).